Consider the following 136-residue polypeptide: Ribosome-binding factor A (136 aa).

This sequence belongs to the RbfA family. As to quaternary structure, monomer. Binds 30S ribosomal subunits, but not 50S ribosomal subunits or 70S ribosomes.

The protein localises to the cytoplasm. Functionally, one of several proteins that assist in the late maturation steps of the functional core of the 30S ribosomal subunit. Associates with free 30S ribosomal subunits (but not with 30S subunits that are part of 70S ribosomes or polysomes). Required for efficient processing of 16S rRNA. May interact with the 5'-terminal helix region of 16S rRNA. This Serratia proteamaculans (strain 568) protein is Ribosome-binding factor A.